Reading from the N-terminus, the 522-residue chain is GMP synthase [glutamine-hydrolyzing] (522 aa).

One can recognise a Glutamine amidotransferase type-1 domain in the interval 5–204; sequence YILIIDFGSQ…VKNICNYTNV (200 aa). Catalysis depends on Cys-82, which acts as the Nucleophile. Residues His-178 and Glu-180 contribute to the active site. The GMPS ATP-PPase domain maps to 205 to 397; sequence IKYSLSIRKI…IGIPKEIIFR (193 aa). Residue 232–238 coordinates ATP; that stretch reads SGGIDSF.

As to quaternary structure, homodimer.

The enzyme catalyses XMP + L-glutamine + ATP + H2O = GMP + L-glutamate + AMP + diphosphate + 2 H(+). It participates in purine metabolism; GMP biosynthesis; GMP from XMP (L-Gln route): step 1/1. Functionally, catalyzes the synthesis of GMP from XMP. The polypeptide is GMP synthase [glutamine-hydrolyzing] (Wigglesworthia glossinidia brevipalpis).